The chain runs to 101 residues: MSNTQAERSIIGMIDMFHKYTGRDGKIEKPSLLTMMKENFPNFLSACDKKGIHYLATVFEKKDKNEDKKIDFSEFLSLLGDIAADYHKQSHGAAPCSGGSQ.

2 consecutive EF-hand domains span residues 13 to 48 (MIDM…SACD) and 50 to 85 (KGIH…IAAD). 3 residues coordinate Zn(2+): H18, E28, and E38. The Ca(2+) site is built by D63 and N65. Residue E66 coordinates Zn(2+). Residues D67, K69, and E74 each contribute to the Ca(2+) site. The Zn(2+) site is built by H87 and H91.

The protein belongs to the S-100 family. Overexpressed in psoriasis.

Its subcellular location is the cytoplasm. In terms of biological role, may be involved in epidermal differentiation and inflammation and might therefore be important for the pathogenesis of psoriasis and other diseases. This Homo sapiens (Human) protein is Protein S100-A7A (S100A7A).